A 1366-amino-acid chain; its full sequence is DNA-directed RNA polymerase subunit beta' (1366 aa).

Over residues 1-23 (MTSSKPKKSSRVRKTSKNSKKNN) the composition is skewed to basic residues. Positions 1–25 (MTSSKPKKSSRVRKTSKNSKKNNKI) are disordered. Residues Cys248, Cys315, Cys322, and Cys325 each coordinate Zn(2+). Residues 1290–1366 (DYTVDMPQSP…LQEEGLLSDE (77 aa)) form a disordered region. Residues 1295-1305 (MPQSPTVSSTA) show a composition bias toward polar residues. Low complexity predominate over residues 1354-1366 (LEGLQEEGLLSDE).

The protein belongs to the RNA polymerase beta' chain family. RpoC2 subfamily. In cyanobacteria the RNAP catalytic core is composed of 2 alpha, 1 beta, 1 beta', 1 gamma and 1 omega subunit. When a sigma factor is associated with the core the holoenzyme is formed, which can initiate transcription. Zn(2+) serves as cofactor.

The catalysed reaction is RNA(n) + a ribonucleoside 5'-triphosphate = RNA(n+1) + diphosphate. DNA-dependent RNA polymerase catalyzes the transcription of DNA into RNA using the four ribonucleoside triphosphates as substrates. This chain is DNA-directed RNA polymerase subunit beta', found in Prochlorococcus marinus (strain MIT 9515).